Consider the following 436-residue polypeptide: 3-ketoacyl-CoA thiolase (436 aa).

C99 functions as the Acyl-thioester intermediate in the catalytic mechanism. Active-site proton acceptor residues include H392 and C422.

It belongs to the thiolase-like superfamily. Thiolase family. As to quaternary structure, heterotetramer of two alpha chains (FadJ) and two beta chains (FadI).

The protein localises to the cytoplasm. The enzyme catalyses an acyl-CoA + acetyl-CoA = a 3-oxoacyl-CoA + CoA. The protein operates within lipid metabolism; fatty acid beta-oxidation. Functionally, catalyzes the final step of fatty acid oxidation in which acetyl-CoA is released and the CoA ester of a fatty acid two carbons shorter is formed. The chain is 3-ketoacyl-CoA thiolase from Aeromonas salmonicida (strain A449).